The sequence spans 429 residues: UPF0761 membrane protein ABO_1543 (429 aa).

The next 6 helical transmembrane spans lie at 45–65 (LFAI…VPAL), 102–122 (LTVL…STVE), 141–161 (LLMY…GLAI), 184–204 (WLAV…YTVV), 216–236 (LGAA…TFFI), and 256–278 (LLWI…ALVV).

Belongs to the UPF0761 family.

It localises to the cell inner membrane. The chain is UPF0761 membrane protein ABO_1543 from Alcanivorax borkumensis (strain ATCC 700651 / DSM 11573 / NCIMB 13689 / SK2).